The sequence spans 758 residues: 5-methyltetrahydropteroyltriglutamate--homocysteine methyltransferase (758 aa).

5-methyltetrahydropteroyltri-L-glutamate is bound by residues 17 to 20 (RELK) and lysine 113. L-homocysteine contacts are provided by residues 433–435 (IGS) and glutamate 486. Residues 433–435 (IGS) and glutamate 486 contribute to the L-methionine site. 5-methyltetrahydropteroyltri-L-glutamate contacts are provided by residues 517–518 (RC) and tryptophan 563. L-homocysteine is bound at residue aspartate 601. Aspartate 601 provides a ligand contact to L-methionine. Glutamate 607 serves as a coordination point for 5-methyltetrahydropteroyltri-L-glutamate. Zn(2+)-binding residues include histidine 643, cysteine 645, and glutamate 667. Histidine 696 functions as the Proton donor in the catalytic mechanism. A Zn(2+)-binding site is contributed by cysteine 728.

The protein belongs to the vitamin-B12 independent methionine synthase family. Zn(2+) is required as a cofactor.

The catalysed reaction is 5-methyltetrahydropteroyltri-L-glutamate + L-homocysteine = tetrahydropteroyltri-L-glutamate + L-methionine. It participates in amino-acid biosynthesis; L-methionine biosynthesis via de novo pathway; L-methionine from L-homocysteine (MetE route): step 1/1. Functionally, catalyzes the transfer of a methyl group from 5-methyltetrahydrofolate to homocysteine resulting in methionine formation. In Nitrosomonas europaea (strain ATCC 19718 / CIP 103999 / KCTC 2705 / NBRC 14298), this protein is 5-methyltetrahydropteroyltriglutamate--homocysteine methyltransferase.